Consider the following 441-residue polypeptide: Ribulose bisphosphate carboxylase large chain (441 aa).

Residue K4 is modified to N6,N6,N6-trimethyllysine. Residues N113 and T163 each contribute to the substrate site. The active-site Proton acceptor is the K165. K167 provides a ligand contact to substrate. Residues K191, D193, and E194 each contribute to the Mg(2+) site. K191 carries the N6-carboxylysine modification. The Proton acceptor role is filled by H284. R285, H317, and S369 together coordinate substrate.

The protein belongs to the RuBisCO large chain family. Type I subfamily. Heterohexadecamer of 8 large chains and 8 small chains; disulfide-linked. The disulfide link is formed within the large subunit homodimers. It depends on Mg(2+) as a cofactor. The disulfide bond which can form in the large chain dimeric partners within the hexadecamer appears to be associated with oxidative stress and protein turnover.

Its subcellular location is the plastid. The protein resides in the chloroplast. The catalysed reaction is 2 (2R)-3-phosphoglycerate + 2 H(+) = D-ribulose 1,5-bisphosphate + CO2 + H2O. The enzyme catalyses D-ribulose 1,5-bisphosphate + O2 = 2-phosphoglycolate + (2R)-3-phosphoglycerate + 2 H(+). In terms of biological role, ruBisCO catalyzes two reactions: the carboxylation of D-ribulose 1,5-bisphosphate, the primary event in carbon dioxide fixation, as well as the oxidative fragmentation of the pentose substrate in the photorespiration process. Both reactions occur simultaneously and in competition at the same active site. This Darlingtonia californica (California pitcher plant) protein is Ribulose bisphosphate carboxylase large chain.